The sequence spans 186 residues: Peptidyl-tRNA hydrolase (186 aa).

Y13 contacts tRNA. Catalysis depends on H18, which acts as the Proton acceptor. Residues Y59, N61, and N107 each coordinate tRNA.

It belongs to the PTH family. Monomer.

The protein resides in the cytoplasm. It catalyses the reaction an N-acyl-L-alpha-aminoacyl-tRNA + H2O = an N-acyl-L-amino acid + a tRNA + H(+). Its function is as follows. Hydrolyzes ribosome-free peptidyl-tRNAs (with 1 or more amino acids incorporated), which drop off the ribosome during protein synthesis, or as a result of ribosome stalling. In terms of biological role, catalyzes the release of premature peptidyl moieties from peptidyl-tRNA molecules trapped in stalled 50S ribosomal subunits, and thus maintains levels of free tRNAs and 50S ribosomes. The sequence is that of Peptidyl-tRNA hydrolase from Thermotoga maritima (strain ATCC 43589 / DSM 3109 / JCM 10099 / NBRC 100826 / MSB8).